Consider the following 260-residue polypeptide: Small ribosomal subunit protein uS2 (260 aa).

Residues 225 to 260 are disordered; that stretch reads KGQTQTEAAPNAQAAPEAAAPAEQPAEEAAAASSEG. The segment covering 231–260 has biased composition (low complexity); the sequence is EAAPNAQAAPEAAAPAEQPAEEAAAASSEG.

Belongs to the universal ribosomal protein uS2 family.

The protein is Small ribosomal subunit protein uS2 of Rhodopirellula baltica (strain DSM 10527 / NCIMB 13988 / SH1).